The sequence spans 148 residues: UPF0756 membrane protein YeaL (148 aa).

The next 4 membrane-spanning stretches (helical) occupy residues 14–34 (ALGF…LIIV), 51–71 (LTVG…SGTL), 86–106 (LVAI…ITLM), and 121–141 (VLGV…AGLV).

The protein belongs to the UPF0756 family.

It is found in the cell membrane. In Salmonella choleraesuis (strain SC-B67), this protein is UPF0756 membrane protein YeaL.